The following is a 302-amino-acid chain: Probable 2-(5''-triphosphoribosyl)-3'-dephosphocoenzyme-A synthase (302 aa).

Belongs to the CitG/MdcB family.

It catalyses the reaction 3'-dephospho-CoA + ATP = 2'-(5''-triphospho-alpha-D-ribosyl)-3'-dephospho-CoA + adenine. The chain is Probable 2-(5''-triphosphoribosyl)-3'-dephosphocoenzyme-A synthase from Albidiferax ferrireducens (strain ATCC BAA-621 / DSM 15236 / T118) (Rhodoferax ferrireducens).